Reading from the N-terminus, the 162-residue chain is Small ribosomal subunit protein uS12m (162 aa).

The N-terminal 37 residues, methionine 1–leucine 37, are a transit peptide targeting the mitochondrion.

This sequence belongs to the universal ribosomal protein uS12 family. Component of the mitochondrial small ribosomal subunit (mt-SSU). Mature yeast 74S mitochondrial ribosomes consist of a small (37S) and a large (54S) subunit. The 37S small subunit contains a 15S ribosomal RNA (15S mt-rRNA) and at least 32 different proteins. The 54S large subunit contains a 21S rRNA (21S mt-rRNA) and at least 45 different proteins. uS12m forms part of the decoding center of the mt-SSU.

It localises to the mitochondrion. Its function is as follows. Component of the mitochondrial ribosome (mitoribosome), a dedicated translation machinery responsible for the synthesis of mitochondrial genome-encoded proteins, including at least some of the essential transmembrane subunits of the mitochondrial respiratory chain. The mitoribosomes are attached to the mitochondrial inner membrane and translation products are cotranslationally integrated into the membrane. uS12m is required for respiratory growth. The protein is Small ribosomal subunit protein uS12m of Schizosaccharomyces pombe (strain 972 / ATCC 24843) (Fission yeast).